The primary structure comprises 310 residues: Ribosomal RNA small subunit methyltransferase H (310 aa).

Residues 32 to 34, Asp52, Phe79, Asp100, and Gln107 contribute to the S-adenosyl-L-methionine site; that span reads GGH.

It belongs to the methyltransferase superfamily. RsmH family.

Its subcellular location is the cytoplasm. The enzyme catalyses cytidine(1402) in 16S rRNA + S-adenosyl-L-methionine = N(4)-methylcytidine(1402) in 16S rRNA + S-adenosyl-L-homocysteine + H(+). Functionally, specifically methylates the N4 position of cytidine in position 1402 (C1402) of 16S rRNA. This Bacillus thuringiensis subsp. konkukian (strain 97-27) protein is Ribosomal RNA small subunit methyltransferase H.